The sequence spans 414 residues: Serine/threonine transporter SstT (414 aa).

Helical transmembrane passes span Gly-16–Ser-36, Leu-46–Val-66, Ile-84–Phe-104, Ala-143–Leu-163, Ala-180–Val-200, Leu-219–Phe-239, Met-300–Val-320, and Val-332–Ile-352.

Belongs to the dicarboxylate/amino acid:cation symporter (DAACS) (TC 2.A.23) family.

The protein localises to the cell inner membrane. It carries out the reaction L-serine(in) + Na(+)(in) = L-serine(out) + Na(+)(out). The enzyme catalyses L-threonine(in) + Na(+)(in) = L-threonine(out) + Na(+)(out). Its function is as follows. Involved in the import of serine and threonine into the cell, with the concomitant import of sodium (symport system). The chain is Serine/threonine transporter SstT from Salmonella schwarzengrund (strain CVM19633).